The chain runs to 430 residues: Small ribosomal subunit protein uS9m (430 aa).

The transit peptide at 1 to 34 (MLSRLFLRHSNLRFVTLVSSKSNSQIFSSFIRPL) directs the protein to the mitochondrion. Residues 32 to 97 (RPLSTNSSGG…GGEGKWPEEP (66 aa)) are disordered. Gly residues predominate over residues 39-48 (SGGGGNGDGN). Positions 68-79 (GPFSSDDSFGSS) are enriched in low complexity. The segment covering 80–91 (GVAGSGLPGGEG) has biased composition (gly residues).

This sequence belongs to the universal ribosomal protein uS9 family. As to quaternary structure, interacts (via C terminus) with PIA2. Component of the mitochondrial ribosome small subunit. Expressed in root tips, young leaves, flowers and siliques.

It is found in the mitochondrion. In terms of biological role, mitochondrial ribosomal protein required for central cell maturation. May work together with PIA2 in controlling female gametophyte development, possibly by regulating the expression of some mitochondrial proteins. The chain is Small ribosomal subunit protein uS9m from Arabidopsis thaliana (Mouse-ear cress).